The sequence spans 313 residues: Ribosomal RNA small subunit methyltransferase H (313 aa).

Residues 33-35 (GGH), Asp-53, Phe-80, Asp-102, and Gln-109 each bind S-adenosyl-L-methionine. A disordered region spans residues 291–313 (SDEEMRANPRAQSAKLRAAEKIR).

It belongs to the methyltransferase superfamily. RsmH family.

It localises to the cytoplasm. The catalysed reaction is cytidine(1402) in 16S rRNA + S-adenosyl-L-methionine = N(4)-methylcytidine(1402) in 16S rRNA + S-adenosyl-L-homocysteine + H(+). Functionally, specifically methylates the N4 position of cytidine in position 1402 (C1402) of 16S rRNA. This chain is Ribosomal RNA small subunit methyltransferase H, found in Heliobacterium modesticaldum (strain ATCC 51547 / Ice1).